The sequence spans 230 residues: Ribonuclease 3 (230 aa).

The 134-residue stretch at 1-134 (MKQLEELLST…FLGALLLDKG (134 aa)) folds into the RNase III domain. Residue E47 participates in Mg(2+) binding. The active site involves D51. The Mg(2+) site is built by D120 and E123. Residue E123 is part of the active site. Residues 160-229 (DYKTCLQEFL…AKNALAQLSE (70 aa)) enclose the DRBM domain.

It belongs to the ribonuclease III family. Homodimer. The cofactor is Mg(2+).

The protein localises to the cytoplasm. It carries out the reaction Endonucleolytic cleavage to 5'-phosphomonoester.. In terms of biological role, digests double-stranded RNA. Involved in the processing of primary rRNA transcript to yield the immediate precursors to the large and small rRNAs (23S and 16S). Processes some mRNAs, and tRNAs when they are encoded in the rRNA operon. Processes pre-crRNA and tracrRNA of type II CRISPR loci if present in the organism. The chain is Ribonuclease 3 from Streptococcus pyogenes serotype M49 (strain NZ131).